Consider the following 123-residue polypeptide: Large ribosomal subunit protein bL17 (123 aa).

Belongs to the bacterial ribosomal protein bL17 family. In terms of assembly, part of the 50S ribosomal subunit. Contacts protein L32.

The sequence is that of Large ribosomal subunit protein bL17 from Borrelia hermsii (strain HS1 / DAH).